The following is a 285-amino-acid chain: D-apionate oxidoisomerase (285 aa).

NAD(+) is bound by residues 15 to 17, E36, and D71; that span reads GKM. H116 and E186 together coordinate Zn(2+).

Belongs to the ApnO family. It depends on Zn(2+) as a cofactor.

The catalysed reaction is D-apionate + NAD(+) = 3-oxoisoapionate + NADH + H(+). The protein operates within carbohydrate metabolism. Functionally, involved in catabolism of D-apiose. Catalyzes the conversion of D-apionate to 3-oxo-isoapionate. The sequence is that of D-apionate oxidoisomerase from Pectobacterium atrosepticum (strain SCRI 1043 / ATCC BAA-672) (Erwinia carotovora subsp. atroseptica).